Here is a 258-residue protein sequence, read N- to C-terminus: MVLIRVLANLLILQLSYAQKSSELVFGGRPCNINEHRSLVVLFNSSGFLCGGTLINQDWVVTAAHCDSNNFQLLFGVHSKKTLNEDEQTRDPKEKFFCPNRKKDDEVDKDIMLIKLDSSVNNSEHIAPLSLPSSPPSVGSVCRIMGWGKTIPTKDIYPDVPHCANINILDHAVCRTAYSWRQVANTTLCAGILQGGKDTCHFDSGGPLICNEQFHGIVSWGGHPCGQPREPGVYTNVFDYTDWIQSIIAGNKDATCPP.

An N-terminal signal peptide occupies residues 1 to 18 (MVLIRVLANLLILQLSYA). A propeptide spanning residues 19–24 (QKSSEL) is cleaved from the precursor. One can recognise a Peptidase S1 domain in the interval 25-249 (VFGGRPCNIN…YTDWIQSIIA (225 aa)). 6 cysteine pairs are disulfide-bonded: C31–C163, C50–C66, C98–C256, C142–C210, C174–C189, and C200–C225. N44 is a glycosylation site (N-linked (GlcNAc...) asparagine). Residues H65 and D110 each act as charge relay system in the active site. N-linked (GlcNAc...) asparagine glycosylation is found at N121 and N185. S204 (charge relay system) is an active-site residue.

This sequence belongs to the peptidase S1 family. Snake venom subfamily. Monomer. As to expression, expressed by the venom gland.

The protein localises to the secreted. Functionally, snake venom serine protease that activates plasminogen. This Trimeresurus albolabris (White-lipped pit viper) protein is Venom plasminogen activator GPV-PA.